The primary structure comprises 357 residues: Poly(3-hydroxyalkanoate) polymerase subunit PhaE (357 aa).

A disordered region spans residues 320-357; sequence AALAGEEPATKPATALRSPAPAAKAPARRRTTKTNPAD. Low complexity predominate over residues 331–344; it reads PATALRSPAPAAKA.

It belongs to the PHA/PHB synthase family. Type III PhaE subfamily. In terms of assembly, a large complex of PhaC and PhaE; the ratio of the subunits has been estimated to be from 1:1 to 4:1, with more PhaE than PhaC.

The protein resides in the cytoplasm. It functions in the pathway biopolymer metabolism; poly-(R)-3-hydroxybutanoate biosynthesis. Its function is as follows. Polymerizes D(-)-3-hydroxybutyryl-CoA to create polyhydroxybutyrate (PHB) which consists of thousands of hydroxybutyrate molecules linked end to end. This subunit has no catalytic activity but enhances the activity of PhaC, the catalytic subunit, 100-fold. This Allochromatium vinosum (strain ATCC 17899 / DSM 180 / NBRC 103801 / NCIMB 10441 / D) (Chromatium vinosum) protein is Poly(3-hydroxyalkanoate) polymerase subunit PhaE.